A 505-amino-acid chain; its full sequence is Putative thymidine phosphorylase (505 aa).

This sequence belongs to the thymidine/pyrimidine-nucleoside phosphorylase family. Type 2 subfamily.

It catalyses the reaction thymidine + phosphate = 2-deoxy-alpha-D-ribose 1-phosphate + thymine. The protein is Putative thymidine phosphorylase of Tolumonas auensis (strain DSM 9187 / NBRC 110442 / TA 4).